A 484-amino-acid polypeptide reads, in one-letter code: Synaptic vesicle membrane protein VAT-1 homolog (484 aa).

Low complexity-rich tracts occupy residues 1–13 (MSGE…QQNA) and 40–61 (SAST…PAAE). 2 disordered regions span residues 1–65 (MSGE…KAPE) and 402–484 (IGKI…KEEN). The span at 411-484 (PMKEEEKKEE…KKEEVKKEEN (74 aa)) shows a compositional bias: basic and acidic residues.

It belongs to the zinc-containing alcohol dehydrogenase family. Quinone oxidoreductase subfamily.

The chain is Synaptic vesicle membrane protein VAT-1 homolog from Danio rerio (Zebrafish).